A 621-amino-acid polypeptide reads, in one-letter code: Uptake hydrogenase large subunit (621 aa).

Cys75, Cys78, Cys600, and Cys603 together coordinate Ni(2+).

This sequence belongs to the [NiFe]/[NiFeSe] hydrogenase large subunit family. Heterodimer of a large and a small subunit. Requires Ni(2+) as cofactor.

It localises to the cell membrane. The catalysed reaction is H2 + A = AH2. This enzyme recycles the H(2) produced by nitrogenase to increase the production of ATP and to protect nitrogenase against inhibition or damage by O(2) under carbon- or phosphate-limited conditions. This chain is Uptake hydrogenase large subunit (hupL), found in Alcaligenes hydrogenophilus.